A 554-amino-acid chain; its full sequence is Muellerian-inhibiting factor (554 aa).

An N-terminal signal peptide occupies residues 1 to 24; that stretch reads MQGPHLSPLVLLLATMGAVLQPEA. Positions 25–446 are excised as a propeptide; that stretch reads VENLATNTRG…GREGRGRTGR (422 aa). Residues Asn-62, Asn-326, and Asn-410 are each glycosylated (N-linked (GlcNAc...) asparagine). 3 cysteine pairs are disulfide-bonded: Cys-456-Cys-520, Cys-482-Cys-551, and Cys-486-Cys-553.

Belongs to the TGF-beta family. In terms of assembly, homodimer; disulfide-linked. In terms of processing, preproprotein is proteolytically processed to generate N- and C-terminal cleavage products that homodimerize and associate to form a biologically active non-covalent complex. Binding of the non-covalent complex to AMHRII induces dissociation of the pro-region from the mature C-terminal dimer. The N-terminal portion of the protein, despite having no intrinsic activity, has the role of amplifying the activity of the C-terminus. Expressed in Sertoli cells of fetal testes, and in testes just after birth, but absent in adult testes. In female, AMH is expressed after birth in the granulosa cells of the follicle.

It localises to the secreted. Plays an important role in several reproductive functions, including Muellerian duct regression during male fetal sexua,l differentiation and in the adult plays a role in Leydig cell differentiation and function. In female acts as a negative regulator of the primordial to primary follicle transition and decreases FSH sensitivity of growing follicles. Binds to its sole type II receptor, AMHR2 that recruits type I receptors ACVR1 and BMPR1A which subsequently activates the Smad pathway. This Mus musculus (Mouse) protein is Muellerian-inhibiting factor (Amh).